The following is a 376-amino-acid chain: c-di-GMP synthase (376 aa).

This sequence belongs to the CD-NTase family. G05 subfamily.

The enzyme catalyses 2 GTP = 3',3'-c-di-GMP + 2 diphosphate. Cyclic nucleotide synthase (second messenger synthase) of a CBASS antivirus system. CBASS (cyclic oligonucleotide-based antiphage signaling system) provides immunity against bacteriophage. The CD-NTase protein synthesizes cyclic nucleotides in response to infection; these serve as specific second messenger signals. The signals activate a diverse range of effectors, leading to bacterial cell death and thus abortive phage infection. A type I-D CBASS(GG) system. Its function is as follows. Cyclic dinucleotide synthase that catalyzes the synthesis of c-di-GMP, has no activity with other NTP substrates. This chain is c-di-GMP synthase, found in Roseivirga ehrenbergii (strain DSM 102268 / JCM 13514 / KCTC 12282 / NCIMB 14502 / KMM 6017).